The primary structure comprises 172 residues: RNA silencing suppressor p19 (172 aa).

Disordered regions lie at residues 1-38 and 152-172; these read MEGAIQGSDAREQANSERWDGGCGGTITPFKLPDESPG and VEGNVSRGRPEGAKAFEKESE. Composition is skewed to basic and acidic residues over residues 9-20 and 159-172; these read DAREQANSERWD and GRPEGAKAFEKESE.

It belongs to the tombusvirus protein p19 family. In terms of assembly, homodimer.

In terms of biological role, viral suppressor of RNA silencing which binds specifically to silencing RNAs (siRNAs). Acts as a molecular caliper to specifically select siRNAs based on the length of the duplex region of the RNA. The sequence is that of RNA silencing suppressor p19 from Havel river virus (HaRV).